Reading from the N-terminus, the 37-residue chain is Large ribosomal subunit protein bL36c (37 aa).

Belongs to the bacterial ribosomal protein bL36 family.

The protein resides in the plastid. Its subcellular location is the chloroplast. This chain is Large ribosomal subunit protein bL36c, found in Piper cenocladum (Ant piper).